The following is a 221-amino-acid chain: Charged multivesicular body protein 3 (221 aa).

Gly2 is lipidated: N-myristoyl glycine. Positions 22-54 (KIRKEMRVIDRQIRDIQREEEKVKRSIKDAAKK) form a coiled coil. 2 important for autoinhibitory function regions span residues 59-64 (VCIILA) and 168-169 (IL). A coiled-coil region spans residues 144–221 (LEDTLEGMDD…MQSRLAALRS (78 aa)). A disordered region spans residues 181-221 (PSKVTDLPDPVAIGATAAPEEESEEEEEIEEMQSRLAALRS). The segment covering 199-211 (PEEESEEEEEIEE) has biased composition (acidic residues). Positions 200–210 (EEESEEEEEIE) match the MIT-interacting motif motif. Interaction with STAMBP stretches follow at residues 202 to 206 (ESEEE) and 220 to 221 (RS).

This sequence belongs to the SNF7 family. Probable core component of the endosomal sorting required for transport complex III (ESCRT-III). ESCRT-III components are thought to multimerize to form a flat lattice on the perimeter membrane of the endosome. Several assembly forms of ESCRT-III may exist that interact and act sequentially.

Its subcellular location is the cytoplasm. It is found in the cytosol. The protein localises to the membrane. The protein resides in the endosome. It localises to the late endosome membrane. Its function is as follows. Probable core component of the endosomal sorting required for transport complex III (ESCRT-III) which is involved in multivesicular bodies (MVBs) formation and sorting of endosomal cargo proteins into MVBs. MVBs contain intraluminal vesicles (ILVs) that are generated by invagination and scission from the limiting membrane of the endosome and mostly are delivered to lysosomes enabling degradation of membrane proteins, such as stimulated growth factor receptors, lysosomal enzymes and lipids. Involved in late stages of cytokinesis. Plays a role in endosomal sorting/trafficking of EGF receptor. This is Charged multivesicular body protein 3 (chmp3) from Danio rerio (Zebrafish).